Here is a 486-residue protein sequence, read N- to C-terminus: ATP-dependent rRNA helicase RRP3 (486 aa).

The disordered stretch occupies residues 1–58 (MNGAKRRKVAQDTPRNTKPVAQEKPARAEPKPSSDEESEEESATLEEPSAEETAVDAP). Residues 24-34 (KPARAEPKPSS) show a composition bias toward basic and acidic residues. Residues 35 to 54 (DEESEEESATLEEPSAEETA) are compositionally biased toward acidic residues. Positions 60-88 (KTFKDLGVNDALCEACEKLNYKYPTPIQE) match the Q motif motif. The Helicase ATP-binding domain occupies 91-262 (IPVALQGRDI…RASLRDPVKV (172 aa)). 104–111 (AETGSGKT) contacts ATP. The DEAD box motif lies at 210-213 (DEAD). Positions 286-434 (QKDVHLIYLI…EYPTEKEEVM (149 aa)) constitute a Helicase C-terminal domain. 2 stretches are compositionally biased toward basic and acidic residues: residues 451-460 (MKSFTEERGK) and 476-486 (RGRDDMDREEG). The tract at residues 451-486 (MKSFTEERGKKGSTLKGGRGKKGGKRGRDDMDREEG) is disordered.

The protein belongs to the DEAD box helicase family. DDX47/RRP3 subfamily. As to quaternary structure, interacts with the SSU processome.

It localises to the nucleus. The enzyme catalyses ATP + H2O = ADP + phosphate + H(+). Functionally, ATP-dependent rRNA helicase required for pre-ribosomal RNA processing. Involved in the maturation of the 35S-pre-rRNA and to its cleavage to mature 18S rRNA. The protein is ATP-dependent rRNA helicase RRP3 of Gibberella zeae (strain ATCC MYA-4620 / CBS 123657 / FGSC 9075 / NRRL 31084 / PH-1) (Wheat head blight fungus).